A 237-amino-acid chain; its full sequence is Ribonuclease PH (237 aa).

Phosphate contacts are provided by residues Arg-86 and 124–126 (GTR).

It belongs to the RNase PH family. In terms of assembly, homohexameric ring arranged as a trimer of dimers.

It catalyses the reaction tRNA(n+1) + phosphate = tRNA(n) + a ribonucleoside 5'-diphosphate. Functionally, phosphorolytic 3'-5' exoribonuclease that plays an important role in tRNA 3'-end maturation. Removes nucleotide residues following the 3'-CCA terminus of tRNAs; can also add nucleotides to the ends of RNA molecules by using nucleoside diphosphates as substrates, but this may not be physiologically important. Probably plays a role in initiation of 16S rRNA degradation (leading to ribosome degradation) during starvation. This is Ribonuclease PH from Erythrobacter litoralis (strain HTCC2594).